Consider the following 357-residue polypeptide: MGVKSLVPQELIEKIKLISPGTELRKALDDIINANFGALIFLVDDPKKYEDVIQGGFWLDTDFSAEKLYELSKMDGAIVLSEDITKIYYANVHLVPDPTIPTGETGTRHRTAERLAKQTGKVVIAVSRRRNIISLYYKNYKYVVNQVDFLISKVTQAISTLEKYKDNFNKLLSELEVLELENRVTLADVVRTLAKGFELLRIVEEIRPYIVELGEEGRLARMQLRELTEDVDDLLVLLIMDYSSEEVEEETAQNILQDFITRREPSPISISRVLGYDVQQAAQLDDVLVSARGYRLLKTVARIPLSIGYNVVRMFKTLDQISKASVEDLKKVEGIGEKRARAISESISSLKHRKTSE.

The 141-residue stretch at 8 to 148 folds into the DAC domain; sequence PQELIEKIKL…NYKYVVNQVD (141 aa). 5 residues coordinate 3',3'-c-di-AMP: G76, L94, T107, T111, and R128.

Belongs to the DisA family. Homooctamer. Mg(2+) serves as cofactor.

The enzyme catalyses 2 ATP = 3',3'-c-di-AMP + 2 diphosphate. With respect to regulation, inhibited by 3'-dATP. Its function is as follows. Participates in a DNA-damage check-point. DisA forms globular foci that rapidly scan along the chromosomes searching for lesions. Has diadenylate cyclase activity, catalyzing the condensation of 2 ATP molecules into cyclic di-AMP (c-di-AMP). c-di-AMP likely acts as a signaling molecule that may couple DNA integrity with a cellular process. This rate-limiting step is the accessibility of the active site; mutating the possible exit tunnel (residues 128-130) increases product 2-fold despite Arg-130 being important for ATP-binding. Does not convert GTP to c-di-GMP. This Thermotoga maritima (strain ATCC 43589 / DSM 3109 / JCM 10099 / NBRC 100826 / MSB8) protein is DNA integrity scanning protein DisA.